We begin with the raw amino-acid sequence, 223 residues long: Endonuclease V (223 aa).

Residues Asp35 and Asp103 each coordinate Mg(2+).

The protein belongs to the endonuclease V family. Mg(2+) serves as cofactor.

Its subcellular location is the cytoplasm. It catalyses the reaction Endonucleolytic cleavage at apurinic or apyrimidinic sites to products with a 5'-phosphate.. In terms of biological role, DNA repair enzyme involved in the repair of deaminated bases. Selectively cleaves double-stranded DNA at the second phosphodiester bond 3' to a deoxyinosine leaving behind the intact lesion on the nicked DNA. In Escherichia coli O45:K1 (strain S88 / ExPEC), this protein is Endonuclease V.